An 87-amino-acid chain; its full sequence is MNNYDKTMRFNLDDVPKENVKSVLTNVYNTLKERGYDPVNQIVGYLLSGDPAYIPRHNEARNQIRRIDRDEIMEELVSNYLNASKDN.

This sequence belongs to the UPF0297 family.

The sequence is that of UPF0297 protein Sca_1229 from Staphylococcus carnosus (strain TM300).